A 185-amino-acid polypeptide reads, in one-letter code: Ribosome-recycling factor (185 aa).

Belongs to the RRF family.

The protein resides in the cytoplasm. In terms of biological role, responsible for the release of ribosomes from messenger RNA at the termination of protein biosynthesis. May increase the efficiency of translation by recycling ribosomes from one round of translation to another. The protein is Ribosome-recycling factor of Streptomyces avermitilis (strain ATCC 31267 / DSM 46492 / JCM 5070 / NBRC 14893 / NCIMB 12804 / NRRL 8165 / MA-4680).